We begin with the raw amino-acid sequence, 132 residues long: Large ribosomal subunit protein uL14 (132 aa).

This sequence belongs to the universal ribosomal protein uL14 family. In terms of assembly, part of the 50S ribosomal subunit. Forms a cluster with proteins L3 and L24e, part of which may contact the 16S rRNA in 2 intersubunit bridges.

In terms of biological role, binds to 23S rRNA. Forms part of two intersubunit bridges in the 70S ribosome. This is Large ribosomal subunit protein uL14 from Thermoplasma acidophilum (strain ATCC 25905 / DSM 1728 / JCM 9062 / NBRC 15155 / AMRC-C165).